The following is a 155-amino-acid chain: Small ribosomal subunit protein uS7 (155 aa).

The protein belongs to the universal ribosomal protein uS7 family. In terms of assembly, part of the 30S ribosomal subunit. Contacts proteins S9 and S11.

One of the primary rRNA binding proteins, it binds directly to 16S rRNA where it nucleates assembly of the head domain of the 30S subunit. Is located at the subunit interface close to the decoding center, probably blocks exit of the E-site tRNA. The chain is Small ribosomal subunit protein uS7 from Halorhodospira halophila (strain DSM 244 / SL1) (Ectothiorhodospira halophila (strain DSM 244 / SL1)).